The following is an 843-amino-acid chain: MADLNSVIRIKPFHFIHVLDNNTNVTRVEVGPQTFTRQDHEKLVSGPEPMIMIPQRNYCTISNPVVRNENGSLVLDEYGQVKLRHGDEEIRFSQEPFPLYPGEKISGKVTALQVVAPLKALRLRALRDFTEAKVTHVAGDEWLFEGPATYLPRIDVRIEEEIKATIIGPNQALKLRANKACSDRSGVARKAGEEWLVRQHGAYLPGVDEKVVEIVNAYVLTDKKALHLKATKTFLDETRKTQRKAGEEWLVVSTDAETHIPDVYEQVVGEVHITTLSNRQYCVVLDPIGANGKPQLGHKQLRKGELAFFLNPGESLEGNKIHNIYVLTEQEALLLRAKETFSIDGESHLAGDRWMIYGPCDYVPPVQVEVVEKRESIPLDENEGIYVRDIKTGKVASIKGQSYMLKANEELWEKVLPRTVEEVLAKESLNPEFTDNRDSTRVVTYRAPHNSAVQIYDYKEKKSRVVFGPDLVMLGPDEHFTVLSLSGDKPKRPHQIKAIALFLGPDFMTDVVIVETSDHARLSLKLSYNWEFKVDRSKIEDAQKIFQVPDFVGDSCKAIASRVRGAVAAVSFDDFHKRSAEVIRQSVFGLDESGEVRKNFSFNSNNLVITNIDIQSVEPVDQRTRDSLQKSVQLAIEITTKSQEAAARHEAERLEQGARGRLERQKIHDEAQAELARKDLLQLQAQSAAVESTGQATAEAQATAEAANIAAEANVKQAELKAQATKIRSESEISLLKAKRENELSYQKSIDELELTKQSDLAEIEASKFKAIVESIGRDTLKSIACAGNEMQAKLLQGLGLKSFMITDGKSPLNLFDTANGIIGNNNQMVNMSNAAKQSGRRN.

N-acetylalanine is present on Ala2. MVP repeat units lie at residues 2-56 (ADLN…IPQR), 57-111 (NYCT…KVTA), 112-163 (LQVV…EEIK), 164-216 (ATII…EIVN), 217-272 (AYVL…GEVH), 273-324 (ITTL…IHNI), 325-376 (YVLT…KRES), 377-442 (IPLD…STRV), and 443-505 (VTYR…FLGP). A disordered region spans residues 643-663 (QEAAARHEAERLEQGARGRLE). Basic and acidic residues predominate over residues 646–663 (AARHEAERLEQGARGRLE).

In terms of assembly, the vault ribonucleoprotein particle is a huge (400 A x 670 A) cage structure of 12.9 MDa. It consists of a dimer of half-vaults, with each half-vault comprising 39 identical major vault protein (MVP) chains. Dictyostelium is one of the few organisms in which the major component is actually two proteins (alpha and beta).

It localises to the cytoplasm. The protein resides in the nucleus. In terms of biological role, unknown, though MVP-alpha is required for normal vault structure. The polypeptide is Major vault protein alpha (mvpA) (Dictyostelium discoideum (Social amoeba)).